Reading from the N-terminus, the 294-residue chain is Survival motor neuron protein (294 aa).

The span at 1-12 (MAMSSGGSGGGV) shows a compositional bias: gly residues. The interval 1 to 32 (MAMSSGGSGGGVPEQEDSVLFRRGTGQSDDSD) is disordered. At alanine 2 the chain carries N-acetylalanine. Phosphoserine; by PKA occurs at positions 4, 5, and 8. Threonine 25 carries the post-translational modification Phosphothreonine. Residues 26 to 51 (GQSDDSDIWDDTALIKAYDKAVASFK) form an interacts with GEMIN2 region. 2 positions are modified to phosphoserine: serine 28 and serine 31. A Glycyl lysine isopeptide (Lys-Gly) (interchain with G-Cter in SUMO2) cross-link involves residue lysine 51. The interval 59-88 (ICETSGKPKTTPKRKPAKKNKSQKKNTAAS) is disordered. The span at 68-82 (TTPKRKPAKKNKSQK) shows a compositional bias: basic residues. Threonine 69 is modified (phosphothreonine). Threonine 85 is modified (phosphothreonine; by PKA). Positions 91-151 (QWKVGDKCSA…LSPICEVANN (61 aa)) constitute a Tudor domain. The tract at residues 97–209 (KCSAIWSEDG…MPGPRLGPGK (113 aa)) is required for interaction with RPP20/POP7. Over residues 156 to 166 (AQENENESQVS) the composition is skewed to low complexity. Positions 156–222 (AQENENESQV…KFNGPPPPPP (67 aa)) are disordered. Serine 187 carries the post-translational modification Phosphoserine; by PKA. Positions 194–204 (LPPPPPMPGPR) are enriched in pro residues. Over residues 206 to 215 (GPGKPGLKFN) the composition is skewed to low complexity. Residue lysine 209 forms a Glycyl lysine isopeptide (Lys-Gly) (interchain with G-Cter in SUMO2) linkage. Residues 240–267 (PPIIPPPPPICPDSLDDADALGSMLISW) are P2 (binding site for SNRPB). An involved in homooligomerization region spans residues 252–280 (DSLDDADALGSMLISWYMSGYHTGYYMGF). Residues 279-294 (GFRQNQKEGRCSHSLN) form a required for interaction with SYNCRIP region.

Belongs to the SMN family. Homooligomer; may form higher order homooligomers in the dimer to octamer range. Part of the core SMN complex that contains SMN1, GEMIN2/SIP1, DDX20/GEMIN3, GEMIN4, GEMIN5, GEMIN6, GEMIN7, GEMIN8 and STRAP/UNRIP. Part of the SMN-Sm complex that contains SMN1, GEMIN2/SIP1, DDX20/GEMIN3, GEMIN4, GEMIN5, GEMIN6, GEMIN7, GEMIN8, STRAP/UNRIP and the Sm proteins SNRPB, SNRPD1, SNRPD2, SNRPD3, SNRPE, SNRPF and SNRPG. Component of an import snRNP complex composed of KPNB1, RNUT1, SMN1 and ZNF259. Interacts with DDX20, FBL, NOLA1, RNUT1, SYNCRIP and with several spliceosomal snRNP core Sm proteins, including SNRPB, SNRPD1, SNRPD2, SNRPD3, SNRPE and ILF3. Interacts with GEMIN2; the interaction is direct. Interacts with GEMIN3; the interaction is direct. Interacts with GEMIN8; the interaction is direct. Interacts with SNRPB; the interaction is direct. Interacts (via Tudor domain) with SNRPD1 (via C-terminus); the interaction is direct. Interacts with SNRPD2; the interaction is direct. Interacts (via Tudor domain) with SNRPD3 (via C-terminus); the interaction is direct. Interacts with SNRPE; the interaction is direct. Interacts with OSTF1, LSM10, LSM11 and RPP20/POP7. Interacts (via C-terminal region) with ZPR1 (via C-terminal region). Interacts (via Tudor domain) with COIL. Interacts with SETX; recruits SETX to POLR2A. Interacts with POLR2A (via the C-terminal domain (CTD)). Interacts with PRMT5. Interacts with XRN2. Interacts (via C-terminus) with FMR1 (via C-terminus); the interaction is direct and occurs in a RNA-independent manner. Interacts (via Tudor domain) with SF3B2 ('Arg-508'-methylated form). Interacts with WRAP53/TCAB1. Interacts (via Tudor domain) with ELAVL4 in an RNA-independent manner; the interaction is required for localization of ELAVL4 to RNA granules. Interacts with FRG1. As to quaternary structure, does not homooligomerize. Does not interact with SNRPB. Expressed in a wide variety of tissues. Expressed at high levels in brain, kidney and liver, moderate levels in skeletal and cardiac muscle, and low levels in fibroblasts and lymphocytes. Also seen at high levels in spinal cord. Present in osteoclasts and mononuclear cells (at protein level).

It is found in the nucleus. It localises to the gem. The protein resides in the cajal body. The protein localises to the cytoplasm. Its subcellular location is the cytoplasmic granule. It is found in the perikaryon. It localises to the cell projection. The protein resides in the neuron projection. The protein localises to the axon. Its subcellular location is the myofibril. It is found in the sarcomere. It localises to the z line. In terms of biological role, the SMN complex catalyzes the assembly of small nuclear ribonucleoproteins (snRNPs), the building blocks of the spliceosome, and thereby plays an important role in the splicing of cellular pre-mRNAs. Most spliceosomal snRNPs contain a common set of Sm proteins SNRPB, SNRPD1, SNRPD2, SNRPD3, SNRPE, SNRPF and SNRPG that assemble in a heptameric protein ring on the Sm site of the small nuclear RNA to form the core snRNP (Sm core). In the cytosol, the Sm proteins SNRPD1, SNRPD2, SNRPE, SNRPF and SNRPG are trapped in an inactive 6S pICln-Sm complex by the chaperone CLNS1A that controls the assembly of the core snRNP. To assemble core snRNPs, the SMN complex accepts the trapped 5Sm proteins from CLNS1A forming an intermediate. Within the SMN complex, SMN1 acts as a structural backbone and together with GEMIN2 it gathers the Sm complex subunits. Binding of snRNA inside 5Sm ultimately triggers eviction of the SMN complex, thereby allowing binding of SNRPD3 and SNRPB to complete assembly of the core snRNP. Ensures the correct splicing of U12 intron-containing genes that may be important for normal motor and proprioceptive neurons development. Also required for resolving RNA-DNA hybrids created by RNA polymerase II, that form R-loop in transcription terminal regions, an important step in proper transcription termination. May also play a role in the metabolism of small nucleolar ribonucleoprotein (snoRNPs). The chain is Survival motor neuron protein (SMN1) from Homo sapiens (Human).